We begin with the raw amino-acid sequence, 425 residues long: MAAIADIIAREILDSRGNPTVEVDVTLESGAQGRAAVPSGASTGAHEAVELRDGDKSRYGGKGVLHAVSFVEGEIFEAIGGMDASEQLRIDETLIAVDGTPNKSRLGANAMLAVSLATAKAAANHQGVPLYRYLGGVYARTLPVPMMNIVNGGKHADNPIDIQEFMIQPVAAPTIADAVRVGAEIFAALKKELSAAGHNTNVGDEGGFAPGLKSAEEALSFITKACEKAGYRPGEDVTFALDCAATEFFKDGVYDLEGEGKKFDAAGMVRYLEDLAAKFPIVSIEDGLAEDDWEGWKLLTDTLGRKVQLVGDDLFVTNPDRLRHGIALGTANAILVKVNQIGTLSETLEAVETAHRAGYAAVMSHRSGETEDSTIADLAVATNCGQIKTGSLSRSDRTAKYNQLIRIEQDLDTSGRYAGRTILRG.

Q163 is a binding site for (2R)-2-phosphoglycerate. E205 functions as the Proton donor in the catalytic mechanism. Residues D242, E285, and D312 each contribute to the Mg(2+) site. (2R)-2-phosphoglycerate contacts are provided by K337, R366, S367, and K388. The active-site Proton acceptor is K337.

It belongs to the enolase family. Mg(2+) serves as cofactor.

The protein localises to the cytoplasm. Its subcellular location is the secreted. The protein resides in the cell surface. It catalyses the reaction (2R)-2-phosphoglycerate = phosphoenolpyruvate + H2O. The protein operates within carbohydrate degradation; glycolysis; pyruvate from D-glyceraldehyde 3-phosphate: step 4/5. Functionally, catalyzes the reversible conversion of 2-phosphoglycerate (2-PG) into phosphoenolpyruvate (PEP). It is essential for the degradation of carbohydrates via glycolysis. The polypeptide is Enolase (Granulibacter bethesdensis (strain ATCC BAA-1260 / CGDNIH1)).